Reading from the N-terminus, the 127-residue chain is Fluoride-specific ion channel FluC (127 aa).

The next 4 membrane-spanning stretches (helical) occupy residues 4–24 (LLLA…LLSM), 35–55 (LGTL…FAWF), 71–91 (TGFC…VFLL), and 103–123 (VFVN…LFSA). Residues G75 and T78 each contribute to the Na(+) site.

The protein belongs to the fluoride channel Fluc/FEX (TC 1.A.43) family.

The protein resides in the cell inner membrane. It carries out the reaction fluoride(in) = fluoride(out). With respect to regulation, na(+) is not transported, but it plays an essential structural role and its presence is essential for fluoride channel function. Its function is as follows. Fluoride-specific ion channel. Important for reducing fluoride concentration in the cell, thus reducing its toxicity. The protein is Fluoride-specific ion channel FluC of Escherichia coli O81 (strain ED1a).